We begin with the raw amino-acid sequence, 34 residues long: Voltage sensor toxin 3 (34 aa).

Cystine bridges form between cysteine 2–cysteine 17, cysteine 9–cysteine 22, and cysteine 16–cysteine 29.

Belongs to the neurotoxin 10 (Hwtx-1) family. 61 (VSTX3) subfamily. As to expression, expressed by the venom gland.

The protein localises to the secreted. In terms of biological role, potent voltage-gated sodium channel blocker (IC(50)=190 nM and 210 nM on human and rat Nav1.3/SCN3A respectively, 430 nM on human Nav1.7/SCN9A, 770 nM and 290 nM on human and rat Nav1.8/SCN10A, respectively). Binds the voltage-sensor domain of the potassium channel KvAP (from Aeropyrum pernix) and weakly inhibits this channel. The protein is Voltage sensor toxin 3 of Grammostola rosea (Chilean rose tarantula).